The primary structure comprises 325 residues: Replication factor C small subunit (325 aa).

Position 44-51 (44-51 (GPPGTGKT)) interacts with ATP.

Belongs to the activator 1 small subunits family. RfcS subfamily. In terms of assembly, heteromultimer composed of small subunits (RfcS) and large subunits (RfcL).

In terms of biological role, part of the RFC clamp loader complex which loads the PCNA sliding clamp onto DNA. The polypeptide is Replication factor C small subunit (Thermofilum pendens (strain DSM 2475 / Hrk 5)).